Reading from the N-terminus, the 242-residue chain is Probable L-ribulose-5-phosphate 4-epimerase UlaF (242 aa).

Substrate contacts are provided by residues 31-32 (GN), 48-49 (SG), and 78-79 (SS). Aspartate 80, histidine 99, and histidine 101 together coordinate Zn(2+). The active-site Proton donor/acceptor is aspartate 124. Histidine 175 is a binding site for Zn(2+). The active-site Proton donor/acceptor is tyrosine 234.

This sequence belongs to the aldolase class II family. AraD/FucA subfamily. Zn(2+) is required as a cofactor.

The catalysed reaction is L-ribulose 5-phosphate = D-xylulose 5-phosphate. Its pathway is cofactor degradation; L-ascorbate degradation; D-xylulose 5-phosphate from L-ascorbate: step 4/4. Functionally, catalyzes the isomerization of L-ribulose 5-phosphate to D-xylulose 5-phosphate. Is involved in the anaerobic L-ascorbate utilization. The chain is Probable L-ribulose-5-phosphate 4-epimerase UlaF from Mycoplasma pneumoniae (strain ATCC 29342 / M129 / Subtype 1) (Mycoplasmoides pneumoniae).